The following is a 428-amino-acid chain: Glutamate-1-semialdehyde 2,1-aminomutase (428 aa).

Lysine 265 carries the N6-(pyridoxal phosphate)lysine modification.

It belongs to the class-III pyridoxal-phosphate-dependent aminotransferase family. HemL subfamily. Homodimer. The cofactor is pyridoxal 5'-phosphate.

The protein localises to the cytoplasm. The enzyme catalyses (S)-4-amino-5-oxopentanoate = 5-aminolevulinate. Its pathway is porphyrin-containing compound metabolism; protoporphyrin-IX biosynthesis; 5-aminolevulinate from L-glutamyl-tRNA(Glu): step 2/2. This is Glutamate-1-semialdehyde 2,1-aminomutase from Ruthia magnifica subsp. Calyptogena magnifica.